We begin with the raw amino-acid sequence, 450 residues long: tRNA modification GTPase MnmE (450 aa).

3 residues coordinate (6S)-5-formyl-5,6,7,8-tetrahydrofolate: arginine 23, glutamate 79, and lysine 118. The TrmE-type G domain maps to 214–374 (GITLILVGKP…LKEHILNKVG (161 aa)). Asparagine 224 is a binding site for K(+). Residues 224 to 229 (NAGKSS), 243 to 249 (TSIAGTT), and 268 to 271 (DTAG) each bind GTP. Residue serine 228 coordinates Mg(2+). The K(+) site is built by threonine 243, isoleucine 245, and threonine 248. Threonine 249 serves as a coordination point for Mg(2+). Residue lysine 450 coordinates (6S)-5-formyl-5,6,7,8-tetrahydrofolate.

Belongs to the TRAFAC class TrmE-Era-EngA-EngB-Septin-like GTPase superfamily. TrmE GTPase family. Homodimer. Heterotetramer of two MnmE and two MnmG subunits. K(+) is required as a cofactor.

Its subcellular location is the cytoplasm. Its function is as follows. Exhibits a very high intrinsic GTPase hydrolysis rate. Involved in the addition of a carboxymethylaminomethyl (cmnm) group at the wobble position (U34) of certain tRNAs, forming tRNA-cmnm(5)s(2)U34. The protein is tRNA modification GTPase MnmE of Francisella tularensis subsp. holarctica (strain OSU18).